The primary structure comprises 163 residues: 6,7-dimethyl-8-ribityllumazine synthase (163 aa).

5-amino-6-(D-ribitylamino)uracil is bound by residues phenylalanine 27, 58–60 (ALE), and 87–89 (CVV). 92-93 (DT) serves as a coordination point for (2S)-2-hydroxy-3-oxobutyl phosphate. Histidine 95 (proton donor) is an active-site residue. 5-amino-6-(D-ribitylamino)uracil is bound at residue asparagine 120. Arginine 134 contacts (2S)-2-hydroxy-3-oxobutyl phosphate.

This sequence belongs to the DMRL synthase family.

It carries out the reaction (2S)-2-hydroxy-3-oxobutyl phosphate + 5-amino-6-(D-ribitylamino)uracil = 6,7-dimethyl-8-(1-D-ribityl)lumazine + phosphate + 2 H2O + H(+). The protein operates within cofactor biosynthesis; riboflavin biosynthesis; riboflavin from 2-hydroxy-3-oxobutyl phosphate and 5-amino-6-(D-ribitylamino)uracil: step 1/2. Catalyzes the formation of 6,7-dimethyl-8-ribityllumazine by condensation of 5-amino-6-(D-ribitylamino)uracil with 3,4-dihydroxy-2-butanone 4-phosphate. This is the penultimate step in the biosynthesis of riboflavin. This is 6,7-dimethyl-8-ribityllumazine synthase from Nitrobacter hamburgensis (strain DSM 10229 / NCIMB 13809 / X14).